Consider the following 632-residue polypeptide: Nucleoside triphosphatase I (632 aa).

The region spanning 42–204 (FLGLDKMHSL…IMLVNLLRPK (163 aa)) is the Helicase ATP-binding domain. Position 55-62 (55-62 (HETGVGKT)) interacts with ATP. Positions 141-144 (DECH) match the DEXH box motif. The 166-residue stretch at 367-532 (KFTDVCLRIL…EFTQLFKVFK (166 aa)) folds into the Helicase C-terminal domain. The binding to the cap-specific mRNA (nucleoside-2'-O-)-methyltransferase stretch occupies residues 457–524 (DIFILDMTWN…DIIRNKSKEF (68 aa)).

Belongs to the helicase family. NPH I subfamily. In terms of assembly, monomer. Interacts (via C-terminus) with RAP94 (via N-terminus). Interacts with the cap-specific mRNA (nucleoside-2'-O-)-methyltransferase.

It is found in the virion. It catalyses the reaction a ribonucleoside 5'-triphosphate + H2O = a ribonucleoside 5'-diphosphate + phosphate + H(+). Functionally, DNA-dependent ATPase required for providing the needed energy to achieve the termination of early transcripts. Acts in concert with the RAP94 subunit of the virion RNA polymerase and the capping enzyme/VTF to catalyze release of UUUUUNU-containing nascent RNA from the elongation complex. NPH-I must bind ssDNA in order to exhibit ATPase activity. The sequence is that of Nucleoside triphosphatase I (NPH1) from Rabbit fibroma virus (strain Kasza) (RFV).